We begin with the raw amino-acid sequence, 321 residues long: Phospho-N-acetylmuramoyl-pentapeptide-transferase (321 aa).

The next 10 membrane-spanning stretches (helical) occupy residues 6–26 (MLIPMVSAFAITIMFMPLFIG), 53–73 (TMGGLIFIAAIIVSAIWVGIW), 77–97 (LTLSVWVSLFILVLYGLLGFY), 121–141 (ILGAIIFLIAYFHEGFDHTLW), 144–164 (IIGNVSAAWFYVLFVIVWLVG), 175–195 (LDGLVAGQTTISFGTYAIIAA), 200–220 (TDVLIVCLVTIGAMLGFLMFN), 226–246 (IFMGDLGSLALGGMLAVVAIL), 251–271 (WSLLLIGIIYVTETASVILQV), and 301–321 (IDLTFWLVGLIGSGIYLAFFL).

This sequence belongs to the glycosyltransferase 4 family. MraY subfamily. Mg(2+) serves as cofactor.

The protein resides in the cell membrane. The catalysed reaction is UDP-N-acetyl-alpha-D-muramoyl-L-alanyl-gamma-D-glutamyl-L-lysyl-D-alanyl-D-alanine + di-trans,octa-cis-undecaprenyl phosphate = Mur2Ac(oyl-L-Ala-gamma-D-Glu-L-Lys-D-Ala-D-Ala)-di-trans,octa-cis-undecaprenyl diphosphate + UMP. Its pathway is cell wall biogenesis; peptidoglycan biosynthesis. In terms of biological role, catalyzes the initial step of the lipid cycle reactions in the biosynthesis of the cell wall peptidoglycan: transfers peptidoglycan precursor phospho-MurNAc-pentapeptide from UDP-MurNAc-pentapeptide onto the lipid carrier undecaprenyl phosphate, yielding undecaprenyl-pyrophosphoryl-MurNAc-pentapeptide, known as lipid I. The polypeptide is Phospho-N-acetylmuramoyl-pentapeptide-transferase (Lacticaseibacillus paracasei (strain ATCC 334 / BCRC 17002 / CCUG 31169 / CIP 107868 / KCTC 3260 / NRRL B-441) (Lactobacillus paracasei)).